Consider the following 208-residue polypeptide: Thymidylate kinase (208 aa).

Residue 10–17 (GGEGVGKS) participates in ATP binding.

It belongs to the thymidylate kinase family.

The catalysed reaction is dTMP + ATP = dTDP + ADP. Its function is as follows. Phosphorylation of dTMP to form dTDP in both de novo and salvage pathways of dTTP synthesis. This chain is Thymidylate kinase, found in Rhizorhabdus wittichii (strain DSM 6014 / CCUG 31198 / JCM 15750 / NBRC 105917 / EY 4224 / RW1) (Sphingomonas wittichii).